A 290-amino-acid chain; its full sequence is 4-diphosphocytidyl-2-C-methyl-D-erythritol kinase (290 aa).

The active site involves K10. Residue 95-105 (PVAAGLAGGSS) coordinates ATP. Residue D137 is part of the active site.

It belongs to the GHMP kinase family. IspE subfamily.

It catalyses the reaction 4-CDP-2-C-methyl-D-erythritol + ATP = 4-CDP-2-C-methyl-D-erythritol 2-phosphate + ADP + H(+). The protein operates within isoprenoid biosynthesis; isopentenyl diphosphate biosynthesis via DXP pathway; isopentenyl diphosphate from 1-deoxy-D-xylulose 5-phosphate: step 3/6. In terms of biological role, catalyzes the phosphorylation of the position 2 hydroxy group of 4-diphosphocytidyl-2C-methyl-D-erythritol. This chain is 4-diphosphocytidyl-2-C-methyl-D-erythritol kinase, found in Geobacillus kaustophilus (strain HTA426).